The primary structure comprises 162 residues: MDFRIGQGYDVHQLVPGRPLIIGGVTIPYERGLLGHSDADVLLHAITDALFGAAALGDIGRHFSDTDPRFKGADSRALLRECAARVAQAGFSIRNVDSTIIAQAPKLAPHIDAMRANIAADLGLPLDRVNVKAKTNEKLGYLGRGEGIEAQAAALVVREAAA.

The a divalent metal cation site is built by Asp10 and His12. 4-CDP-2-C-methyl-D-erythritol 2-phosphate is bound by residues 10 to 12 and 36 to 37; these read DVH and HS. Residue His44 coordinates a divalent metal cation. 4-CDP-2-C-methyl-D-erythritol 2-phosphate-binding positions include 58–60, 63–67, and Arg144; these read DIG and FSDTD.

Belongs to the IspF family. In terms of assembly, homotrimer. A divalent metal cation serves as cofactor.

It catalyses the reaction 4-CDP-2-C-methyl-D-erythritol 2-phosphate = 2-C-methyl-D-erythritol 2,4-cyclic diphosphate + CMP. The protein operates within isoprenoid biosynthesis; isopentenyl diphosphate biosynthesis via DXP pathway; isopentenyl diphosphate from 1-deoxy-D-xylulose 5-phosphate: step 4/6. In terms of biological role, involved in the biosynthesis of isopentenyl diphosphate (IPP) and dimethylallyl diphosphate (DMAPP), two major building blocks of isoprenoid compounds. Catalyzes the conversion of 4-diphosphocytidyl-2-C-methyl-D-erythritol 2-phosphate (CDP-ME2P) to 2-C-methyl-D-erythritol 2,4-cyclodiphosphate (ME-CPP) with a corresponding release of cytidine 5-monophosphate (CMP). The sequence is that of 2-C-methyl-D-erythritol 2,4-cyclodiphosphate synthase from Burkholderia thailandensis (strain ATCC 700388 / DSM 13276 / CCUG 48851 / CIP 106301 / E264).